Reading from the N-terminus, the 193-residue chain is Non-canonical purine NTP pyrophosphatase homolog (193 aa).

The protein belongs to the HAM1 NTPase family.

The sequence is that of Non-canonical purine NTP pyrophosphatase homolog from Halalkalibacterium halodurans (strain ATCC BAA-125 / DSM 18197 / FERM 7344 / JCM 9153 / C-125) (Bacillus halodurans).